The sequence spans 438 residues: Adenosylhomocysteinase (438 aa).

Substrate is bound by residues threonine 61, aspartate 137, and glutamate 162. 163–165 (TTT) is a binding site for NAD(+). Residues lysine 192 and aspartate 196 each contribute to the substrate site. Residues asparagine 197, 226-231 (GYGDVG), glutamate 249, asparagine 284, 305-307 (IGH), and asparagine 352 contribute to the NAD(+) site.

The protein belongs to the adenosylhomocysteinase family. NAD(+) is required as a cofactor.

The protein resides in the cytoplasm. The catalysed reaction is S-adenosyl-L-homocysteine + H2O = L-homocysteine + adenosine. It functions in the pathway amino-acid biosynthesis; L-homocysteine biosynthesis; L-homocysteine from S-adenosyl-L-homocysteine: step 1/1. Its function is as follows. May play a key role in the regulation of the intracellular concentration of adenosylhomocysteine. The chain is Adenosylhomocysteinase from Flavobacterium psychrophilum (strain ATCC 49511 / DSM 21280 / CIP 103535 / JIP02/86).